The chain runs to 255 residues: Trypsin alpha-4 (255 aa).

The signal sequence occupies residues 1 to 16 (MLKFVVLLCAISCALG). Positions 17–30 (AAVPEGMVPQLDGR) are cleaved as a propeptide — activation peptide. The Peptidase S1 domain maps to 31–253 (IVGGVATTIS…LRTWVVSAAS (223 aa)). Cysteines 56 and 72 form a disulfide. Catalysis depends on charge relay system residues histidine 71 and aspartate 116. 2 disulfide bridges follow: cysteine 179–cysteine 196 and cysteine 205–cysteine 229. Serine 209 serves as the catalytic Charge relay system.

This sequence belongs to the peptidase S1 family.

It is found in the secreted. Its subcellular location is the extracellular space. It carries out the reaction Preferential cleavage: Arg-|-Xaa, Lys-|-Xaa.. The polypeptide is Trypsin alpha-4 (Lucilia cuprina (Green bottle fly)).